Consider the following 319-residue polypeptide: Putative metal ion transporter YfjQ (319 aa).

Helical transmembrane passes span 254–274 (IMMT…IAGV) and 290–310 (GYFA…IWFV).

Belongs to the CorA metal ion transporter (MIT) (TC 1.A.35) family.

The protein localises to the cell membrane. This is Putative metal ion transporter YfjQ (yfjQ) from Bacillus subtilis (strain 168).